Reading from the N-terminus, the 153-residue chain is D-aminoacyl-tRNA deacylase (153 aa).

The Gly-cisPro motif, important for rejection of L-amino acids motif lies at 137-138; sequence GP.

The protein belongs to the DTD family. As to quaternary structure, homodimer.

The protein resides in the cytoplasm. The enzyme catalyses glycyl-tRNA(Ala) + H2O = tRNA(Ala) + glycine + H(+). The catalysed reaction is a D-aminoacyl-tRNA + H2O = a tRNA + a D-alpha-amino acid + H(+). Its function is as follows. An aminoacyl-tRNA editing enzyme that deacylates mischarged D-aminoacyl-tRNAs. Also deacylates mischarged glycyl-tRNA(Ala), protecting cells against glycine mischarging by AlaRS. Acts via tRNA-based rather than protein-based catalysis; rejects L-amino acids rather than detecting D-amino acids in the active site. By recycling D-aminoacyl-tRNA to D-amino acids and free tRNA molecules, this enzyme counteracts the toxicity associated with the formation of D-aminoacyl-tRNA entities in vivo and helps enforce protein L-homochirality. This is D-aminoacyl-tRNA deacylase from Herpetosiphon aurantiacus (strain ATCC 23779 / DSM 785 / 114-95).